Reading from the N-terminus, the 201-residue chain is Small ribosomal subunit protein uS4 (201 aa).

The 61-residue stretch at 91–151 (ARLDNVIYRA…DRSRSMLWFD (61 aa)) folds into the S4 RNA-binding domain.

It belongs to the universal ribosomal protein uS4 family. In terms of assembly, part of the 30S ribosomal subunit. Contacts protein S5. The interaction surface between S4 and S5 is involved in control of translational fidelity.

Functionally, one of the primary rRNA binding proteins, it binds directly to 16S rRNA where it nucleates assembly of the body of the 30S subunit. Its function is as follows. With S5 and S12 plays an important role in translational accuracy. The polypeptide is Small ribosomal subunit protein uS4 (Corynebacterium urealyticum (strain ATCC 43042 / DSM 7109)).